The following is a 268-amino-acid chain: Eukaryotic translation initiation factor 2 subunit beta (268 aa).

A compositionally biased stretch (basic and acidic residues) spans 1 to 12; sequence MADEINEIREEQ. The disordered stretch occupies residues 1-85; it reads MADEINEIRE…LNNESVDAGE (85 aa). The residue at position 2 (A2) is an N-acetylalanine. Residues S42, S80, and S112 each carry the phosphoserine; by CK2 modification. The segment at 222-246 adopts a C4-type zinc-finger fold; the sequence is CLGCKSPDTILSKENRLFFLRCEKC.

This sequence belongs to the eIF-2-beta/eIF-5 family. Eukaryotic translation initiation factor 2 eIF2 is a heterotrimeric complex composed of an alpha, a beta and a gamma subunit. In terms of processing, phosphorylated at Ser-42, Ser-80 and Ser-112 by CK2.

The protein resides in the cytoplasm. It is found in the cytosol. Its function is as follows. Component of the eIF2 complex that functions in the early steps of protein synthesis by forming a ternary complex with GTP and initiator tRNA. This complex binds to a 40S ribosomal subunit, followed by mRNA binding to form a 43S pre-initiation complex (43S PIC). Junction of the 60S ribosomal subunit to form the 80S initiation complex is preceded by hydrolysis of the GTP bound to eIF2 and release of an eIF2-GDP binary complex. In order for eIF2 to recycle and catalyze another round of initiation, the GDP bound to eIF2 must exchange with GTP by way of a reaction catalyzed by eIF2B. This chain is Eukaryotic translation initiation factor 2 subunit beta, found in Arabidopsis thaliana (Mouse-ear cress).